The chain runs to 149 residues: Hut operon positive regulatory protein (149 aa).

This sequence belongs to the HutP family. In terms of assembly, homohexamer.

Its function is as follows. Antiterminator that binds to cis-acting regulatory sequences on the mRNA in the presence of histidine, thereby suppressing transcription termination and activating the hut operon for histidine utilization. This Geobacillus thermodenitrificans (strain NG80-2) protein is Hut operon positive regulatory protein.